The following is a 798-amino-acid chain: Acetyl-CoA decarbonylase/synthase complex subunit alpha 2 (798 aa).

[4Fe-4S] cluster is bound by residues C65, C68, C69, C71, C76, and C86. Residue H109 participates in CO binding. 3 residues coordinate [Ni-4Fe-4S] cluster: H246, C274, and C313. 4Fe-4S ferredoxin-type domains lie at 395-424 (EEQFMEYARACTQCGNCTIACPQGIRIGEA) and 434-463 (SKLEKEWDVCIACGRCEQVCPKGIPIIDMY). [4Fe-4S] cluster-binding residues include C405, C408, C411, C415, C443, C446, C449, and C453. Residues C511, C540, and C575 each contribute to the [Ni-4Fe-4S] cluster site.

It belongs to the Ni-containing carbon monoxide dehydrogenase family. Heterotetramer of two alpha and two epsilon subunits. The ACDS complex is made up of alpha, epsilon, beta, gamma and delta subunits with a probable stoichiometry of (alpha(2)epsilon(2))(4)-beta(8)-(gamma(1)delta(1))(8). Requires [4Fe-4S] cluster as cofactor. [Ni-4Fe-4S] cluster is required as a cofactor.

The catalysed reaction is CO + 2 oxidized [2Fe-2S]-[ferredoxin] + H2O = 2 reduced [2Fe-2S]-[ferredoxin] + CO2 + 2 H(+). Part of the ACDS complex that catalyzes the reversible cleavage of acetyl-CoA, allowing autotrophic growth from CO(2). The alpha-epsilon subcomponent functions as a carbon monoxide dehydrogenase. This Archaeoglobus fulgidus (strain ATCC 49558 / DSM 4304 / JCM 9628 / NBRC 100126 / VC-16) protein is Acetyl-CoA decarbonylase/synthase complex subunit alpha 2.